Here is a 64-residue protein sequence, read N- to C-terminus: Beta-defensin 1 (64 aa).

Positions 1–22 (MRLHHLLLVLFFVVLSAGSGFT) are cleaved as a signal peptide. Cystine bridges form between cysteine 31–cysteine 60, cysteine 38–cysteine 53, and cysteine 43–cysteine 61.

Belongs to the beta-defensin family. Monomer. Homodimer.

The protein localises to the secreted. Its subcellular location is the membrane. Functionally, has bactericidal activity. May act as a ligand for C-C chemokine receptor CCR6. Positively regulates the sperm motility and bactericidal activity in a CCR6-dependent manner. Binds to CCR6 and triggers Ca2+ mobilization in the sperm which is important for its motility. The polypeptide is Beta-defensin 1 (DEFB1) (Ovis aries (Sheep)).